A 318-amino-acid polypeptide reads, in one-letter code: Olfactory receptor 5M5 (318 aa).

Residues 1 to 31 (MLAPKKMVRGNYSMVTEFILLGLTDRPELQP) lie on the Extracellular side of the membrane. N-linked (GlcNAc...) asparagine glycosylation occurs at Asn-11. Residues 32–52 (LLFVLFLVIYLITVGGNLGMM) traverse the membrane as a helical segment. Residues 53 to 60 (VLIRIDSR) are Cytoplasmic-facing. Residues 61–81 (LHTPMYYFLASLSCLDLCYST) form a helical membrane-spanning segment. Residues 82-105 (NVTPKMLVNFLSEKKTISYAACLV) are Extracellular-facing. The cysteines at positions 103 and 195 are disulfide-linked. A helical membrane pass occupies residues 106-126 (QCYFFIAMVITEYYMLAVMAY). The Cytoplasmic segment spans residues 127 to 139 (DRYMAICNPLLYS). A helical membrane pass occupies residues 140–160 (SKMSKGVCVRLIAGPYIYGFL). Residues 161-202 (SGLMETMWTYRLTFCGSNIINHFYCADPPLIRLSCSDTFIKE) lie on the Extracellular side of the membrane. Residues 203–223 (TSMFVVAGFNLSNSLFIILIS) traverse the membrane as a helical segment. At 224–243 (YLFILIAILRMRSAEGRRKA) the chain is on the cytoplasmic side. A helical transmembrane segment spans residues 244–264 (FSTCGSHLVAVTVFYGTLFCM). Over 265 to 277 (YVRPPTDKSVEQS) the chain is Extracellular. The chain crosses the membrane as a helical span at residues 278 to 298 (KIIAVFYTFVSPMLNPIIYSL). Residues 299 to 318 (RNKDVKHAFWKLVRRNVLSK) lie on the Cytoplasmic side of the membrane.

It belongs to the G-protein coupled receptor 1 family.

The protein resides in the cell membrane. Its function is as follows. Potential odorant receptor. The protein is Olfactory receptor 5M5 of Mus musculus (Mouse).